Reading from the N-terminus, the 166-residue chain is Endoribonuclease YbeY (166 aa).

Zn(2+) contacts are provided by His-132, His-136, and His-142.

This sequence belongs to the endoribonuclease YbeY family. Zn(2+) serves as cofactor.

The protein localises to the cytoplasm. Single strand-specific metallo-endoribonuclease involved in late-stage 70S ribosome quality control and in maturation of the 3' terminus of the 16S rRNA. This is Endoribonuclease YbeY from Clostridium botulinum (strain Langeland / NCTC 10281 / Type F).